Consider the following 423-residue polypeptide: COP9 signalosome complex subunit 3 (423 aa).

The PCI domain maps to 197-365; the sequence is NFERALYFYE…GMVCFHDNPE (169 aa). Residues 403–423 form a disordered region; it reads FVQKSMGSQDDDSGSKPSSYS.

It belongs to the CSN3 family. In terms of assembly, component of the CSN complex, probably composed of cops1, cops2, cops3, cops4, cops5, cops6, cops7, cops8 and cops9.

The protein localises to the cytoplasm. It localises to the nucleus. In terms of biological role, component of the COP9 signalosome complex (CSN), a complex involved in various cellular and developmental processes. The CSN complex is an essential regulator of the ubiquitin (Ubl) conjugation pathway by mediating the deneddylation of the cullin subunits of E3 ligase complexes, leading to modify the Ubl ligase activity. The polypeptide is COP9 signalosome complex subunit 3 (cops3) (Xenopus tropicalis (Western clawed frog)).